We begin with the raw amino-acid sequence, 464 residues long: Purple acid phosphatase (464 aa).

The first 30 residues, 1–30, serve as a signal peptide directing secretion; that stretch reads MGVVEGLLALALVLSACVMCNGGSSSPFIR. 2 N-linked (GlcNAc...) asparagine glycosylation sites follow: asparagine 108 and asparagine 136. Aspartate 162 serves as a coordination point for Fe cation. The N-linked (GlcNAc...) asparagine glycan is linked to asparagine 170. Aspartate 191 and tyrosine 194 together coordinate Fe cation. Aspartate 191 serves as a coordination point for Zn(2+). Asparagine 228 provides a ligand contact to Zn(2+). Asparagine 228 is a binding site for substrate. N-linked (GlcNAc...) asparagine glycosylation occurs at asparagine 301. Residue histidine 313 participates in Zn(2+) binding. Histidine 323 (proton donor) is an active-site residue. A Zn(2+)-binding site is contributed by histidine 350. 350 to 352 contacts substrate; sequence HVH. Histidine 352 serves as a coordination point for Fe cation. N-linked (GlcNAc...) asparagine glycans are attached at residues asparagine 398 and asparagine 423.

The protein belongs to the metallophosphoesterase superfamily. Purple acid phosphatase family. As to quaternary structure, homodimer; disulfide-linked. It depends on Fe cation as a cofactor. Zn(2+) serves as cofactor. The cofactor is Mn(2+). Cu(2+) is required as a cofactor. Requires Mg(2+) as cofactor.

The protein localises to the secreted. It carries out the reaction a phosphate monoester + H2O = an alcohol + phosphate. This is Purple acid phosphatase from Glycine max (Soybean).